The sequence spans 1653 residues: Cortactin-binding protein 2 (1653 aa).

Disordered stretches follow at residues 1 to 27, 203 to 222, 268 to 297, 314 to 339, and 356 to 609; these read MATDGASCEPDASRAPEEAAGATAEAA, KKKTNELEEELSAEKRRSTE, QLKRGSDSKPSLSLPRKTKDRRSVSISVGT, ESTEHVKKSPLTVPVKPSPGSAKGSV, and HGDL…PSID. A coiled-coil region spans residues 119 to 276; the sequence is RKMQERMSTQ…EQLKRGSDSK (158 aa). A compositionally biased stretch (polar residues) spans 379 to 389; the sequence is GPSTGSPPDLT. A compositionally biased stretch (low complexity) spans 390–408; sequence SSAAQSPAAAPHGLPPAHG. Polar residues-rich tracts occupy residues 444–470, 478–490, and 573–584; these read GNANDPDQNGNTTQSPPSRDVSPTSRD, ARNTVTQALSRFT, and TVASSPPSSLPQ. The residue at position 488 (Arg488) is an Asymmetric dimethylarginine. ANK repeat units follow at residues 700–730, 734–763, 767–796, 800–829, and 833–862; these read GRPTLLQQAAAQGNVTLLSMLLNEEGLDINY, DGHSALYSAAKNGHTDCVRLLLNAEAQVNA, NGFTPLCAAAAQGHFECVELLIAYDAHINH, GGQTPLYLACKNGNKECIKLLLEAGTDRSV, and DGWTPVHAAVDTGNVDSLKLLMYHGAPAHG. The disordered stretch occupies residues 860–892; sequence AHGNSLNEEEPESDASDLDEGEESSEGKSKPVV. The span at 866 to 883 shows a compositional bias: acidic residues; the sequence is NEEEPESDASDLDEGEES. The ANK 6 repeat unit spans residues 903-933; sequence EGWTAAHIAASKGFKNCLEILCRHRGLEPER. The tract at residues 1441–1472 is disordered; that stretch reads ESGAWRKVNTSPRRKSGRFSSPTWNKPDLSNE. Residue Ser1514 is modified to Phosphoserine. The segment at 1545–1653 is disordered; it reads DLRTFDSSGN…KNEHIEKLNK (109 aa). 2 stretches are compositionally biased toward polar residues: residues 1549–1564 and 1572–1589; these read FDSSGNNPAFSATANN and KEVSPLSSHQTTECSNNK. The span at 1614 to 1628 shows a compositional bias: low complexity; the sequence is SQNTKRSSSSSNTRQ. The span at 1635-1653 shows a compositional bias: basic and acidic residues; the sequence is SKEENWNLHKNEHIEKLNK.

Interacts with CTTN/cortactin SH3 domain. Interacts with STRN, STRN4/zinedin and MOB4/phocein; this interactions mediate the association with the STRIPAK core complex and may regulate dendritic spine distribution of the STRIPAK complex in hippocampal neurons. Activation of glutamate receptors weakens the interaction with STRN and STRN4.

The protein resides in the cytoplasm. It localises to the cell cortex. Its subcellular location is the cell projection. The protein localises to the dendritic spine. Its function is as follows. Regulates the dendritic spine distribution of CTTN/cortactin in hippocampal neurons, and thus controls dendritic spinogenesis and dendritic spine maintenance. Associates with the striatin-interacting phosphatase and kinase (STRIPAK) core complex to regulate dendritic spine distribution of the STRIPAK complex in hippocampal neurons. The polypeptide is Cortactin-binding protein 2 (CTTNBP2) (Eulemur macaco macaco (Black lemur)).